The chain runs to 342 residues: Aquaporin-8 (342 aa).

3 helical membrane-spanning segments follow: residues 55–75, 98–118, and 126–146; these read FLAV…AIFT, VAGG…FAVL, and CIFY…TMFA. The short motif at 108–110 is the NPA 1 element; it reads NPA. An N-linked (GlcNAc...) asparagine glycan is attached at N166. The next 2 membrane-spanning stretches (helical) occupy residues 184–204 and 215–235; these read TAFA…LAMC and FLPI…SYNA. Residues 240 to 242 carry the NPA 2 motif; sequence NPS. The helical transmembrane segment at 266–286 threads the bilayer; sequence YTWFFVPVLGSHCGAIIGGAI. Residues 302–327 are compositionally biased toward polar residues; that stretch reads TNSVSSMSYNEDNSTLTKRKQVSNIV. Positions 302–342 are disordered; that stretch reads TNSVSSMSYNEDNSTLTKRKQVSNIVHDSKGAKGSSTAPVN. Residue N314 is glycosylated (N-linked (GlcNAc...) asparagine).

Belongs to the MIP/aquaporin (TC 1.A.8) family.

Its subcellular location is the cell membrane. In terms of biological role, aquaglyceroporin that may modulate the water content and osmolytes during anhydrobiosis. This Milnesium tardigradum (Water bear) protein is Aquaporin-8.